The following is a 188-amino-acid chain: Transcription antitermination protein NusB (188 aa).

Residues 154 to 188 are disordered; sequence RAANPGAVSGSDAPVAPWDDSEELPAEDEAEDSRP. Residues 172 to 188 are compositionally biased toward acidic residues; sequence DDSEELPAEDEAEDSRP.

Belongs to the NusB family.

Its function is as follows. Involved in transcription antitermination. Required for transcription of ribosomal RNA (rRNA) genes. Binds specifically to the boxA antiterminator sequence of the ribosomal RNA (rrn) operons. This Corynebacterium efficiens (strain DSM 44549 / YS-314 / AJ 12310 / JCM 11189 / NBRC 100395) protein is Transcription antitermination protein NusB.